A 400-amino-acid chain; its full sequence is CCA-adding enzyme (400 aa).

Residues glycine 28 and arginine 31 each coordinate ATP. CTP-binding residues include glycine 28 and arginine 31. The Mg(2+) site is built by aspartate 41 and aspartate 43. The ATP site is built by arginine 112, aspartate 155, arginine 158, arginine 161, and arginine 164. Arginine 112, aspartate 155, arginine 158, arginine 161, and arginine 164 together coordinate CTP.

The protein belongs to the tRNA nucleotidyltransferase/poly(A) polymerase family. Bacterial CCA-adding enzyme type 3 subfamily. As to quaternary structure, homodimer. Requires Mg(2+) as cofactor.

It catalyses the reaction a tRNA precursor + 2 CTP + ATP = a tRNA with a 3' CCA end + 3 diphosphate. It carries out the reaction a tRNA with a 3' CCA end + 2 CTP + ATP = a tRNA with a 3' CCACCA end + 3 diphosphate. Its function is as follows. Catalyzes the addition and repair of the essential 3'-terminal CCA sequence in tRNAs without using a nucleic acid template. Adds these three nucleotides in the order of C, C, and A to the tRNA nucleotide-73, using CTP and ATP as substrates and producing inorganic pyrophosphate. tRNA 3'-terminal CCA addition is required both for tRNA processing and repair. Also involved in tRNA surveillance by mediating tandem CCA addition to generate a CCACCA at the 3' terminus of unstable tRNAs. While stable tRNAs receive only 3'-terminal CCA, unstable tRNAs are marked with CCACCA and rapidly degraded. This chain is CCA-adding enzyme, found in Staphylococcus aureus (strain MSSA476).